The primary structure comprises 238 residues: CD63 antigen (238 aa).

Over alanine 2–lysine 11 the chain is Cytoplasmic. Residues phenylalanine 12–glycine 32 form a helical membrane-spanning segment. Residues valine 33–serine 51 lie on the Extracellular side of the membrane. A helical membrane pass occupies residues leucine 52–cysteine 72. Residues cysteine 73–cysteine 81 are Cytoplasmic-facing. A helical membrane pass occupies residues leucine 82 to isoleucine 102. The Extracellular portion of the chain corresponds to alanine 103 to valine 203. N-linked (GlcNAc...) asparagine glycans are attached at residues asparagine 130, asparagine 150, and asparagine 172. A helical transmembrane segment spans residues leucine 204–serine 224. Residues cysteine 225 to methionine 238 lie on the Cytoplasmic side of the membrane. The Lysosomal targeting motif signature appears at glycine 234–methionine 238.

This sequence belongs to the tetraspanin (TM4SF) family. Interacts with TIMP1 and ITGB1 and recruits TIMP1 to ITGB1. Interacts with CD9. Identified in a complex with CD9 and ITGB3. Interacts with PMEL. Interacts with KDR/VEGFR2; identified in a complex with ITGB1 and KDR/VEGFR2 and is required to recruit KDR to ITGB1 complexes. Interacts with SYT7. Post-translationally, palmitoylated at a low, basal level in unstimulated platelets. The level of palmitoylation increases when platelets are activated by thrombin (in vitro). As to expression, detected in mast cells and platelets (at protein level).

The protein resides in the cell membrane. Its subcellular location is the lysosome membrane. The protein localises to the late endosome membrane. It is found in the endosome. It localises to the multivesicular body. The protein resides in the melanosome. Its subcellular location is the secreted. The protein localises to the extracellular exosome. It is found in the cell surface. Its function is as follows. Functions as a cell surface receptor for TIMP1 and plays a role in the activation of cellular signaling cascades. Plays a role in the activation of ITGB1 and integrin signaling, leading to the activation of AKT, FAK/PTK2 and MAP kinases. Promotes cell survival, reorganization of the actin cytoskeleton, cell adhesion, spreading and migration, via its role in the activation of AKT and FAK/PTK2. Plays a role in VEGFA signaling via its role in regulating the internalization of KDR/VEGFR2. Plays a role in intracellular vesicular transport processes, and is required for normal trafficking of the PMEL luminal domain that is essential for the development and maturation of melanocytes. Plays a role in the adhesion of leukocytes onto endothelial cells via its role in the regulation of SELP trafficking. May play a role in mast cell degranulation in response to Ms4a2/FceRI stimulation, but not in mast cell degranulation in response to other stimuli. This Rattus norvegicus (Rat) protein is CD63 antigen (Cd63).